The chain runs to 124 residues: Small ribosomal subunit protein uS12 (124 aa).

The segment at 105–124 (QGVKNRKQARSRYGAKKEKG) is disordered. The span at 108–118 (KNRKQARSRYG) shows a compositional bias: basic residues.

It belongs to the universal ribosomal protein uS12 family. As to quaternary structure, part of the 30S ribosomal subunit. Contacts proteins S8 and S17. May interact with IF1 in the 30S initiation complex.

In terms of biological role, with S4 and S5 plays an important role in translational accuracy. Its function is as follows. Interacts with and stabilizes bases of the 16S rRNA that are involved in tRNA selection in the A site and with the mRNA backbone. Located at the interface of the 30S and 50S subunits, it traverses the body of the 30S subunit contacting proteins on the other side and probably holding the rRNA structure together. The combined cluster of proteins S8, S12 and S17 appears to hold together the shoulder and platform of the 30S subunit. This chain is Small ribosomal subunit protein uS12 (rpsL), found in Mycobacterium bovis (strain ATCC BAA-935 / AF2122/97).